Consider the following 313-residue polypeptide: uncharacterized protein (313 aa).

This is an uncharacterized protein from Bacillus subtilis (strain 168).